A 234-amino-acid chain; its full sequence is UPF0758 protein Rfer_3252 (234 aa).

One can recognise an MPN domain in the interval 112-234 (IFATPDAVKH…ALSMAERGLL (123 aa)). Zn(2+)-binding residues include histidine 183, histidine 185, and aspartate 196. A JAMM motif motif is present at residues 183–196 (HNHPSGTVQPSRAD).

This sequence belongs to the UPF0758 family.

The sequence is that of UPF0758 protein Rfer_3252 from Albidiferax ferrireducens (strain ATCC BAA-621 / DSM 15236 / T118) (Rhodoferax ferrireducens).